The chain runs to 253 residues: 5-oxoprolinase subunit A (253 aa).

The protein belongs to the LamB/PxpA family. In terms of assembly, forms a complex composed of PxpA, PxpB and PxpC.

It carries out the reaction 5-oxo-L-proline + ATP + 2 H2O = L-glutamate + ADP + phosphate + H(+). Functionally, catalyzes the cleavage of 5-oxoproline to form L-glutamate coupled to the hydrolysis of ATP to ADP and inorganic phosphate. This Bacillus anthracis (strain CDC 684 / NRRL 3495) protein is 5-oxoprolinase subunit A.